Consider the following 398-residue polypeptide: 1-deoxy-D-xylulose 5-phosphate reductoisomerase (398 aa).

NADPH is bound by residues threonine 10, glycine 11, serine 12, isoleucine 13, glycine 36, asparagine 38, and asparagine 124. Lysine 125 serves as a coordination point for 1-deoxy-D-xylulose 5-phosphate. Glutamate 126 is a binding site for NADPH. A Mn(2+)-binding site is contributed by aspartate 150. Residues serine 151, glutamate 152, serine 176, and histidine 199 each coordinate 1-deoxy-D-xylulose 5-phosphate. Glutamate 152 provides a ligand contact to Mn(2+). Residue glycine 205 coordinates NADPH. Serine 212, asparagine 217, lysine 218, and glutamate 221 together coordinate 1-deoxy-D-xylulose 5-phosphate. Glutamate 221 lines the Mn(2+) pocket.

This sequence belongs to the DXR family. Requires Mg(2+) as cofactor. The cofactor is Mn(2+).

It catalyses the reaction 2-C-methyl-D-erythritol 4-phosphate + NADP(+) = 1-deoxy-D-xylulose 5-phosphate + NADPH + H(+). Its pathway is isoprenoid biosynthesis; isopentenyl diphosphate biosynthesis via DXP pathway; isopentenyl diphosphate from 1-deoxy-D-xylulose 5-phosphate: step 1/6. Functionally, catalyzes the NADPH-dependent rearrangement and reduction of 1-deoxy-D-xylulose-5-phosphate (DXP) to 2-C-methyl-D-erythritol 4-phosphate (MEP). In Nostoc punctiforme (strain ATCC 29133 / PCC 73102), this protein is 1-deoxy-D-xylulose 5-phosphate reductoisomerase.